Consider the following 261-residue polypeptide: Thiazole synthase (261 aa).

Lys95 (schiff-base intermediate with DXP) is an active-site residue. Residues Gly156, 182–183 (AG), and 204–205 (NT) contribute to the 1-deoxy-D-xylulose 5-phosphate site.

This sequence belongs to the ThiG family. Homotetramer. Forms heterodimers with either ThiH or ThiS.

Its subcellular location is the cytoplasm. It carries out the reaction [ThiS sulfur-carrier protein]-C-terminal-Gly-aminoethanethioate + 2-iminoacetate + 1-deoxy-D-xylulose 5-phosphate = [ThiS sulfur-carrier protein]-C-terminal Gly-Gly + 2-[(2R,5Z)-2-carboxy-4-methylthiazol-5(2H)-ylidene]ethyl phosphate + 2 H2O + H(+). It participates in cofactor biosynthesis; thiamine diphosphate biosynthesis. Functionally, catalyzes the rearrangement of 1-deoxy-D-xylulose 5-phosphate (DXP) to produce the thiazole phosphate moiety of thiamine. Sulfur is provided by the thiocarboxylate moiety of the carrier protein ThiS. In vitro, sulfur can be provided by H(2)S. This is Thiazole synthase from Pectobacterium carotovorum subsp. carotovorum (strain PC1).